The primary structure comprises 930 residues: Polypeptide N-acetylgalactosaminyltransferase 5 (930 aa).

Topologically, residues 1–12 are cytoplasmic; it reads MNKIRKFFRGSG. The helical; Signal-anchor for type II membrane protein transmembrane segment at 13–35 threads the bilayer; that stretch reads RVLAFIFVASVIWLLFDMAALRL. At 36–930 the chain is on the lumenal side; the sequence is SFSEINTGIL…KWKFEKYYDV (895 aa). The segment at 163–210 is disordered; that stretch reads GSEKDSFTVSRGVPLNKTAEHTETLDKKQEAPENYNLSSDTSKQASQR. Asn-178 is a glycosylation site (N-linked (GlcNAc...) asparagine). The span at 180–193 shows a compositional bias: basic and acidic residues; it reads TAEHTETLDKKQEA. Residues 197–210 show a composition bias toward polar residues; sequence YNLSSDTSKQASQR. N-linked (GlcNAc...) asparagine glycans are attached at residues Asn-198 and Asn-213. Position 285 is a phosphoserine (Ser-285). Asn-287 and Asn-309 each carry an N-linked (GlcNAc...) asparagine glycan. A disordered region spans residues 344–377; that stretch reads LGESQGKHIPRSQSQTLSSPLAPKRAVSQSKPTL. N-linked (GlcNAc...) asparagine glycans are attached at residues Asn-387 and Asn-403. Cystine bridges form between Cys-476–Cys-708, Cys-699–Cys-779, and Cys-812–Cys-825. Residues 485–594 are catalytic subdomain A; the sequence is LPTTSIIMCF…VGWLEPLLER (110 aa). Residues Asp-526 and Arg-555 each contribute to the substrate site. A glycan (N-linked (GlcNAc...) asparagine) is linked at Asn-568. Position 578 (Asp-578) interacts with Mn(2+). A substrate-binding site is contributed by Ser-579. His-580 contacts Mn(2+). The catalytic subdomain B stretch occupies residues 654-716; the sequence is IIRCPVMAGG…PCSRVGHIFR (63 aa). Trp-685 is a binding site for substrate. His-713 contacts Mn(2+). Residues Arg-716 and Tyr-721 each coordinate substrate. 3 N-linked (GlcNAc...) asparagine glycosylation sites follow: Asn-766, Asn-817, and Asn-835. The Ricin B-type lectin domain maps to 794 to 925; that stretch reads KAPVVRASGV…TEPQQKWKFE (132 aa). Intrachain disulfides connect Cys-848–Cys-863 and Cys-898–Cys-913. Asn-902 is a glycosylation site (N-linked (GlcNAc...) asparagine).

This sequence belongs to the glycosyltransferase 2 family. GalNAc-T subfamily. Interacts with EXT2. Does not interact with EXT1, EXTL1 or EXTL3. It depends on Mn(2+) as a cofactor. As to expression, predominantly expressed in sublingual gland. Expressed at lower level in stomach and small intestine. Weakly or not expressed in submandibular gland, parotid gland, kidney, liver, heart, brain, spleen, lung, skeletal muscle, testis, ovary, cervix and uterus.

It is found in the golgi apparatus membrane. The enzyme catalyses L-seryl-[protein] + UDP-N-acetyl-alpha-D-galactosamine = a 3-O-[N-acetyl-alpha-D-galactosaminyl]-L-seryl-[protein] + UDP + H(+). It catalyses the reaction L-threonyl-[protein] + UDP-N-acetyl-alpha-D-galactosamine = a 3-O-[N-acetyl-alpha-D-galactosaminyl]-L-threonyl-[protein] + UDP + H(+). Its pathway is protein modification; protein glycosylation. Functionally, catalyzes the initial reaction in O-linked oligosaccharide biosynthesis, the transfer of an N-acetyl-D-galactosamine residue to a serine or threonine residue on the protein receptor. Has activity toward EA2 peptide substrate, but has a weak activity toward Muc2, Muc1b, rMuc-2 or mG-Muc substrates. The sequence is that of Polypeptide N-acetylgalactosaminyltransferase 5 (Galnt5) from Rattus norvegicus (Rat).